The primary structure comprises 367 residues: tRNA/tmRNA (uracil-C(5))-methyltransferase (367 aa).

Residues Gln190, Tyr218, Asn223, Glu239, and Asp299 each coordinate S-adenosyl-L-methionine. The Nucleophile role is filled by Cys324. Catalysis depends on Glu358, which acts as the Proton acceptor.

It belongs to the class I-like SAM-binding methyltransferase superfamily. RNA M5U methyltransferase family. TrmA subfamily.

It catalyses the reaction uridine(54) in tRNA + S-adenosyl-L-methionine = 5-methyluridine(54) in tRNA + S-adenosyl-L-homocysteine + H(+). It carries out the reaction uridine(341) in tmRNA + S-adenosyl-L-methionine = 5-methyluridine(341) in tmRNA + S-adenosyl-L-homocysteine + H(+). Functionally, dual-specificity methyltransferase that catalyzes the formation of 5-methyluridine at position 54 (m5U54) in all tRNAs, and that of position 341 (m5U341) in tmRNA (transfer-mRNA). The polypeptide is tRNA/tmRNA (uracil-C(5))-methyltransferase (Yersinia pestis bv. Antiqua (strain Antiqua)).